Reading from the N-terminus, the 380-residue chain is N-acetylneuraminate epimerase (380 aa).

Residues 1–21 (MKFTKTALFTVLAATAFAAQA) form the signal peptide. Kelch repeat units lie at residues 42–86 (TVYV…AGVN), 88–140 (KLYV…AADG), 142–176 (KIYF…AIFD), 177–222 (PYFN…AIKD), 225–274 (LLVV…IAGG), 296–349 (ANYE…SYNN), and 351–380 (VLLI…LTVE). The active-site Proton acceptor is the glutamate 231.

This sequence belongs to the NanM family. In terms of assembly, homodimer.

It localises to the periplasm. It carries out the reaction N-acetyl-alpha-neuraminate = N-acetyl-beta-neuraminate. Its function is as follows. Converts alpha-N-acetylneuranimic acid (Neu5Ac) to the beta-anomer, accelerating the equilibrium between the alpha- and beta-anomers. Probably facilitates sialidase-negative bacteria to compete successfully for limited amounts of extracellular Neu5Ac, which is likely taken up in the beta-anomer. In addition, the rapid removal of sialic acid from solution might be advantageous to the bacterium to damp down host responses. In Pasteurella multocida (strain Pm70), this protein is N-acetylneuraminate epimerase.